A 309-amino-acid chain; its full sequence is Serine/threonine-protein phosphatase 2A catalytic subunit beta isoform (309 aa).

The Mn(2+) site is built by Asp-57, His-59, Asp-85, and Asn-117. His-118 serves as the catalytic Proton donor. Residues His-167 and His-241 each contribute to the Mn(2+) site. A Phosphotyrosine modification is found at Tyr-307. Leu-309 carries the post-translational modification Leucine methyl ester.

The protein belongs to the PPP phosphatase family. PP-1 subfamily. In terms of assembly, PP2A consists of a common heterodimeric core enzyme (composed of a 36 kDa catalytic subunit (subunit C) and a 65 kDa constant regulatory subunit (PR65) (subunit A)) that associates with a variety of regulatory subunits. Proteins that associate with the core dimer include three families of regulatory subunits B (the R2/B/PR55/B55, R3/B''/PR72/PR130/PR59 and R5/B'/B56 families), the 48 kDa variable regulatory subunit, viral proteins, and cell signaling molecules. Binds PPME1. May indirectly interact with SGO1, most probably through regulatory B56 subunits. Interacts with CTTNBP2NL. Interacts with PTPA. Found in a complex with at least ARL2, PPP2CB, PPP2R1A, PPP2R2A, PPP2R5E and TBCD. Interacts with TBCD. Part of the core of STRIPAK complexes composed of PP2A catalytic and scaffolding subunits, the striatins (PP2A regulatory subunits), the striatin-associated proteins MOB4, STRIP1 and STRIP2, PDCD10 and members of the STE20 kinases, such as STK24 and STK26. Mn(2+) serves as cofactor. Post-translationally, reversibly methyl esterified on Leu-309 by leucine carboxyl methyltransferase 1 (Lcmt1) and protein phosphatase methylesterase 1 (Ppme1). Carboxyl methylation influences the affinity of the catalytic subunit for the different regulatory subunits, thereby modulating the PP2A holoenzyme's substrate specificity, enzyme activity and cellular localization. Phosphorylation of either threonine (by autophosphorylation-activated protein kinase) or tyrosine results in inactivation of the phosphatase. Auto-dephosphorylation has been suggested as a mechanism for reactivation. In terms of processing, may be monoubiquitinated by NOSIP.

The protein localises to the cytoplasm. Its subcellular location is the nucleus. It localises to the chromosome. It is found in the centromere. The protein resides in the cytoskeleton. The protein localises to the spindle pole. The catalysed reaction is O-phospho-L-seryl-[protein] + H2O = L-seryl-[protein] + phosphate. It carries out the reaction O-phospho-L-threonyl-[protein] + H2O = L-threonyl-[protein] + phosphate. Catalytic subunit of protein phosphatase 2A (PP2A), a serine/threonine phosphatase involved in the regulation of a wide variety of enzymes, signal transduction pathways, and cellular events. PP2A can modulate the activity of phosphorylase B kinase, casein kinase 2, mitogen-stimulated S6 kinase, and MAP-2 kinase. Part of the striatin-interacting phosphatase and kinase (STRIPAK) complexes. STRIPAK complexes have critical roles in protein (de)phosphorylation and are regulators of multiple signaling pathways including Hippo, MAPK, nuclear receptor and cytoskeleton remodeling. Different types of STRIPAK complexes are involved in a variety of biological processes such as cell growth, differentiation, apoptosis, metabolism and immune regulation. This is Serine/threonine-protein phosphatase 2A catalytic subunit beta isoform (Ppp2cb) from Mus musculus (Mouse).